A 453-amino-acid chain; its full sequence is Chromosomal replication initiator protein DnaA (453 aa).

A domain I, interacts with DnaA modulators region spans residues 1–78 (MTENEQLFWN…FEIFNAEITA (78 aa)). Positions 78–112 (ANYVSNDLHLQETSFSNYQQSSNEVNTLPIRKIDS) are domain II. A domain III, AAA+ region region spans residues 113-331 (NLKEKYTFAN…GALKNISLVA (219 aa)). 4 residues coordinate ATP: glycine 157, glycine 159, lysine 160, and threonine 161. A domain IV, binds dsDNA region spans residues 332-453 (DFKHAKTITV…EIETIKNKIR (122 aa)).

The protein belongs to the DnaA family. As to quaternary structure, oligomerizes as a right-handed, spiral filament on DNA at oriC.

The protein resides in the cytoplasm. In terms of biological role, plays an essential role in the initiation and regulation of chromosomal replication. ATP-DnaA binds to the origin of replication (oriC) to initiate formation of the DNA replication initiation complex once per cell cycle. Binds the DnaA box (a 9 base pair repeat at the origin) and separates the double-stranded (ds)DNA. Forms a right-handed helical filament on oriC DNA; dsDNA binds to the exterior of the filament while single-stranded (ss)DNA is stabiized in the filament's interior. The ATP-DnaA-oriC complex binds and stabilizes one strand of the AT-rich DNA unwinding element (DUE), permitting loading of DNA polymerase. After initiation quickly degrades to an ADP-DnaA complex that is not apt for DNA replication. Binds acidic phospholipids. The polypeptide is Chromosomal replication initiator protein DnaA (Streptococcus agalactiae serotype Ia (strain ATCC 27591 / A909 / CDC SS700)).